The chain runs to 119 residues: MKLLSNISMSSSEIIDVLCENLNDGIWALRVLYAEGAMNKEKLWDYINQYHKDYQIENEKDYEGKKILPSRYALDIMTARLEGAGLISFKAIGRVRIYDVTDLGNVLIKELEKRVEKNN.

As to quaternary structure, homodimer. Binds to TubZ filaments via the C-terminus of TubZ. DNA is not required for binding to TubZ.

In terms of biological role, a DNA-binding protein that is part of the type III plasmid partition system used to ensure correct segregation of the pBc10987 plasmid. Binds TubZ filaments but does not influence the GTPase activity of TubZ with or without DNA. Cooperatively binds to multiple regions in tubC (centromere-like site) upstream of its own gene with consensus sequence N(T/A)ATTNC(C/G)GNAAT(A/T)N; probably forms an extended DNA-protein filament. Binds sites in its own promoter region and presumably represses its expression; its effect on RNA expression has not been shown. Does not specifically bind to the putative origin of replication on pBc10987. This is DNA-binding protein TubR from Bacillus cereus (strain ATCC 10987 / NRS 248).